The primary structure comprises 475 residues: D-lactate dehydrogenase (475 aa).

In terms of domain architecture, FAD-binding PCMH-type spans 43–222 (YGKARPEVLV…TELTLKVIPA (180 aa)).

It belongs to the FAD-binding oxidoreductase/transferase type 4 family. The cofactor is FAD. Zn(2+) serves as cofactor.

It carries out the reaction (R)-lactate + A = pyruvate + AH2. Its function is as follows. Catalyzes the dehydrogenation of (R)-lactate (D-lactate) to pyruvate. Active in vitro with the artificial electron acceptor 2,6-dichlorophenolindophenol (DCPIP), but not with NAD, NADP, or cytochrome c. Also displays a very low oxidase activity in vitro on D-lactate and L-lactate with O2 as the electron acceptor, but this activity is most likely not physiological. The chain is D-lactate dehydrogenase from Anaerostipes hadrus.